Consider the following 261-residue polypeptide: Glutamate racemase (261 aa).

Substrate is bound by residues 12 to 13 (DS) and 44 to 45 (YG). Cys-76 (proton donor/acceptor) is an active-site residue. Substrate is bound at residue 77 to 78 (NT). Cys-180 acts as the Proton donor/acceptor in catalysis. 181–182 (TH) is a binding site for substrate.

It belongs to the aspartate/glutamate racemases family.

It carries out the reaction L-glutamate = D-glutamate. Its pathway is cell wall biogenesis; peptidoglycan biosynthesis. Its function is as follows. Provides the (R)-glutamate required for cell wall biosynthesis. The protein is Glutamate racemase of Borreliella burgdorferi (strain ATCC 35210 / DSM 4680 / CIP 102532 / B31) (Borrelia burgdorferi).